We begin with the raw amino-acid sequence, 1523 residues long: WD repeat-containing protein 62 (1523 aa).

The residue at position 2 (Ala2) is an N-acetylalanine. Position 33 is a phosphoserine (Ser33). Residue Thr46 is modified to Phosphothreonine. WD repeat units lie at residues Thr109–Glu150, Gly153–Ser194, Lys196–Val234, Ile291–Asn330, Ala357–Lys396, Glu411–Trp450, Asp490–Lys529, Ala532–Gln574, Asp578–His618, Ala626–Cys665, Gly671–Gly713, and His714–Met752. Ser501 is modified (phosphoserine). The segment at Gln762–Pro824 is disordered. Residues Pro776 to Arg790 are compositionally biased toward polar residues. A compositionally biased stretch (acidic residues) spans Gln797–Glu809. Residues Glu803–Val846 form a WD 13 repeat. The segment covering Glu810–Pro824 has biased composition (basic and acidic residues). Ser966 and Ser972 each carry phosphoserine. The interval Val1000–Thr1072 is disordered. Thr1072 is modified (phosphothreonine). Phosphoserine is present on residues Ser1117, Ser1143, and Ser1169. The disordered stretch occupies residues Ser1143–Gln1258. Polar residues-rich tracts occupy residues Tyr1167–Ser1177 and Thr1199–Pro1213. The span at Ser1214–Ser1225 shows a compositional bias: low complexity. The segment covering His1226–Leu1235 has biased composition (polar residues). Residue Ser1234 is modified to Phosphoserine.

In terms of assembly, can form homodimers (via C-terminus). Interacts (via C-terminus) with MAPKBP1 (via C-terminus). Interacts with CDK5RAP2, CEP152, CEP63 and KIAA0753. CEP63, CDK5RAP2, CEP152, WDR62 are proposed to form a stepwise assembled complex at the centrosome forming a ring near parental centrioles. Prominent in neural crest lineages from 9.5 dpc to 11.5 dpc. Also expressed in the ventricular and subventricular zones during the period of cerebral cortical neurogenesis (11.5-16.5 dpc), with expression decreasing in intensity by 17.5 dpc. In the cerebellum, it is strongly expressed in precursors of granule neurons at late embryonic and early postnatal stages; by postnatal day 9 (P9). Present in fetal brain, enriched within the ventricular and subventricular zone (at protein level).

Its subcellular location is the nucleus. It localises to the cytoplasm. The protein resides in the cytoskeleton. It is found in the spindle pole. The protein localises to the microtubule organizing center. Its subcellular location is the centrosome. It localises to the centriole. In terms of biological role, required for cerebral cortical development. Plays a role in neuronal proliferation and migration. Plays a role in mother-centriole-dependent centriole duplication; the function seems also to involve CEP152, CDK5RAP2 and CEP63 through a stepwise assembled complex at the centrosome that recruits CDK2 required for centriole duplication. The polypeptide is WD repeat-containing protein 62 (Wdr62) (Mus musculus (Mouse)).